The chain runs to 408 residues: SERPINE1 mRNA-binding protein 1 (408 aa).

Phosphoserine is present on S25. Disordered regions lie at residues 33-292 (AAEN…TLDE) and 328-408 (SKSE…PALA). Residues 51–68 (AKSAAQAAAQTNSNAAGK) are compositionally biased toward low complexity. Residue K52 is modified to N6-acetyllysine; alternate. A Glycyl lysine isopeptide (Lys-Gly) (interchain with G-Cter in SUMO1); alternate cross-link involves residue K52. The residue at position 68 (K68) is an N6-acetyllysine. Composition is skewed to basic and acidic residues over residues 70-80 (LRKESQKDRKN), 89-114 (VDKK…RRPD), and 122-162 (KIID…DRPI). Residue K102 forms a Glycyl lysine isopeptide (Lys-Gly) (interchain with G-Cter in SUMO1); alternate linkage. K102 participates in a covalent cross-link: Glycyl lysine isopeptide (Lys-Gly) (interchain with G-Cter in SUMO2); alternate. K122 and K140 each carry N6-acetyllysine. The span at 164 to 182 (GRGGLGRGRGGRGRGMGRG) shows a compositional bias: gly residues. An omega-N-methylarginine mark is found at R165 and R188. Positions 183-199 (DGFDSRGKREFDRHSGS) are enriched in basic and acidic residues. Residue S197 is modified to Phosphoserine. S199 is subject to Phosphoserine; by MTOR. 3 positions are modified to phosphoserine: S203, S205, and S208. An N6-acetyllysine; alternate modification is found at K211. A Glycyl lysine isopeptide (Lys-Gly) (interchain with G-Cter in SUMO2); alternate cross-link involves residue K211. R216 is subject to Omega-N-methylarginine. S221 carries the post-translational modification Phosphoserine. H222 is covalently cross-linked (Glycyl lysine isopeptide (Lys-Gly) (interchain with G-Cter in SUMO2)). Position 226 is a phosphothreonine; by MTOR (T226). K228 is covalently cross-linked (Glycyl lysine isopeptide (Lys-Gly) (interchain with G-Cter in SUMO1); alternate). A Glycyl lysine isopeptide (Lys-Gly) (interchain with G-Cter in SUMO2); alternate cross-link involves residue K228. K228 is covalently cross-linked (Glycyl lysine isopeptide (Lys-Gly) (interchain with G-Cter in SUMO2)). Phosphoserine is present on residues L231, S234, and Y237. S234 is modified (phosphothreonine). K240 is subject to Phosphothreonine. The segment covering 240 to 253 (KQISYNYSDLDQSN) has biased composition (polar residues). The segment covering 261–275 (GEEHHPVADTENKEN) has biased composition (basic and acidic residues). Residue K281 forms a Glycyl lysine isopeptide (Lys-Gly) (interchain with G-Cter in SUMO1); alternate linkage. Residue K281 forms a Glycyl lysine isopeptide (Lys-Gly) (interchain with G-Cter in SUMO2); alternate linkage. Composition is skewed to basic and acidic residues over residues 282–292 (EEGPKEMTLDE) and 328–342 (SKSE…VMDH). K329 is modified (N6-acetyllysine). S330 bears the Phosphoserine mark. A compositionally biased stretch (gly residues) spans 363 to 372 (GRPGRGGRGG). Omega-N-methylarginine is present on residues R364, R367, and R370. A phosphoserine mark is found at S392 and S394.

The protein belongs to the SERBP1-HABP4 family. In terms of assembly, associates with mature 80S ribosomes. Interacts with EEF2/eEF2; interaction sequesters EEF2/eEF2 at the A-site of the ribosome, thereby blocking the interaction sites of the mRNA-tRNA complex, promoting ribosome stabilization and hibernation. Interacts with SPIN1. Interacts with CHD3 and TDRD3. Interacts with ZDHHC17 (via ANK repeats). In terms of processing, phosphorylation by MTOR inhibits SERBP1 and relieves ribosome hibernation. In terms of tissue distribution, expressed at high level in the heart, skeletal muscle and kidney, and at low levels in placenta, liver and brain.

The protein resides in the cytoplasm. It localises to the nucleus. It is found in the perinuclear region. Ribosome-binding protein that promotes ribosome hibernation, a process during which ribosomes are stabilized in an inactive state and preserved from proteasomal degradation. Acts via its association with EEF2/eEF2 factor, sequestering EEF2/eEF2 at the A-site of the ribosome and promoting ribosome stabilization and storage in an inactive state. May also play a role in the regulation of mRNA stability: binds to the 3'-most 134 nt of the SERPINE1/PAI1 mRNA, a region which confers cyclic nucleotide regulation of message decay. Seems to play a role in PML-nuclear bodies formation. This Homo sapiens (Human) protein is SERPINE1 mRNA-binding protein 1.